Reading from the N-terminus, the 172-residue chain is Adenylate kinase isoenzyme 6 (172 aa).

Positions 13, 15, 16, 17, and 18 each coordinate ATP. The segment at 33 to 56 is NMPbind; sequence NVGDLAREGQLYDGYDEEYDCPIL. Residues 108–118 are LID; that stretch reads NRGYNEKKLKD. 2 residues coordinate ATP: Arg-109 and Lys-148.

This sequence belongs to the adenylate kinase family. AK6 subfamily. As to quaternary structure, monomer and homodimer. Interacts with small ribosomal subunit protein uS11. Not a structural component of 43S pre-ribosomes, but transiently interacts with them by binding to uS11. Interacts with COIL (via C-terminus).

The protein localises to the cytoplasm. It is found in the nucleus. Its subcellular location is the nucleoplasm. The protein resides in the cajal body. The catalysed reaction is AMP + ATP = 2 ADP. It carries out the reaction ATP + H2O = ADP + phosphate + H(+). Its function is as follows. Broad-specificity nucleoside monophosphate (NMP) kinase that catalyzes the reversible transfer of the terminal phosphate group between nucleoside triphosphates and monophosphates. Also has ATPase activity. Involved in the late cytoplasmic maturation steps of the 40S ribosomal particles, specifically 18S rRNA maturation. While NMP activity is not required for ribosome maturation, ATPase activity is. Associates transiently with small ribosomal subunit protein uS11. ATP hydrolysis breaks the interaction with uS11. May temporarily remove uS11 from the ribosome to enable a conformational change of the ribosomal RNA that is needed for the final maturation step of the small ribosomal subunit. Its NMP activity may have a role in nuclear energy homeostasis. May be involved in regulation of Cajal body (CB) formation. The chain is Adenylate kinase isoenzyme 6 from Bos taurus (Bovine).